A 151-amino-acid polypeptide reads, in one-letter code: 3-hydroxyacyl-[acyl-carrier-protein] dehydratase FabZ (151 aa).

The active site involves histidine 57.

Belongs to the thioester dehydratase family. FabZ subfamily.

It is found in the cytoplasm. The enzyme catalyses a (3R)-hydroxyacyl-[ACP] = a (2E)-enoyl-[ACP] + H2O. In terms of biological role, involved in unsaturated fatty acids biosynthesis. Catalyzes the dehydration of short chain beta-hydroxyacyl-ACPs and long chain saturated and unsaturated beta-hydroxyacyl-ACPs. The protein is 3-hydroxyacyl-[acyl-carrier-protein] dehydratase FabZ of Tolumonas auensis (strain DSM 9187 / NBRC 110442 / TA 4).